The sequence spans 224 residues: tRNA (guanine-N(7)-)-methyltransferase (224 aa).

Positions 56, 81, 108, and 131 each coordinate S-adenosyl-L-methionine. Residue aspartate 131 is part of the active site. Substrate contacts are provided by residues lysine 135, aspartate 167, and 202–205; that span reads TKFE.

The protein belongs to the class I-like SAM-binding methyltransferase superfamily. TrmB family.

It carries out the reaction guanosine(46) in tRNA + S-adenosyl-L-methionine = N(7)-methylguanosine(46) in tRNA + S-adenosyl-L-homocysteine. Its pathway is tRNA modification; N(7)-methylguanine-tRNA biosynthesis. Its function is as follows. Catalyzes the formation of N(7)-methylguanine at position 46 (m7G46) in tRNA. The chain is tRNA (guanine-N(7)-)-methyltransferase from Nitrosomonas eutropha (strain DSM 101675 / C91 / Nm57).